Here is a 690-residue protein sequence, read N- to C-terminus: Calpain-9 (690 aa).

Residues 1 to 24 (MPYLYRAPGPQAHPVPKDARITHS) are disordered. Residues 42 to 337 (LFEDADFPAS…FDKVEICNLT (296 aa)) enclose the Calpain catalytic domain. 3 residues coordinate Ca(2+): Leu81, Gly83, and Asp88. Residue Cys97 is part of the active site. Residue Glu167 participates in Ca(2+) binding. Residues His254 and Asn278 contribute to the active site. Glu284, Asp291, Leu312, Asp314, and Glu316 together coordinate Ca(2+). Residues 338-521 (PDALEEDAIH…PPDQETEEEQ (184 aa)) form a domain III region. A disordered region spans residues 498-519 (GNVDIDLPEPPKPTPPDQETEE). 3 consecutive EF-hand domains span residues 518 to 552 (EEEQ…VLQK), 561 to 589 (LSLI…FKVF), and 591 to 626 (DKLK…AGFQ). Positions 522-690 (RFRALFEQVA…NEFIHLTMNI (169 aa)) are domain IV. Residues Asp574, Ser576, Asn578, Lys580, Glu585, Asp604, Asp606, Ser608, Thr610, and Glu615 each coordinate Ca(2+).

It belongs to the peptidase C2 family. Expressed predominantly in stomach.

In terms of biological role, calcium-regulated non-lysosomal thiol-protease. This is Calpain-9 (CAPN9) from Homo sapiens (Human).